The chain runs to 262 residues: Transmembrane protein 81 (262 aa).

A signal peptide spans 1–30 (MKAVATVFICGSLVLITYLPLVVTSPQTLA). The Extracellular segment spans residues 31–225 (IPEKLRQAVG…HLPGWRKKVS (195 aa)). The N-linked (GlcNAc...) asparagine glycan is linked to N45. Residues 83-171 (TNWICGMLHF…VQQLKNLKLV (89 aa)) enclose the Ig-like domain. Residues C104 and C160 are joined by a disulfide bond. N211 is a glycosylation site (N-linked (GlcNAc...) asparagine). The chain crosses the membrane as a helical span at residues 226 to 246 (LALGVGIAAGVVGGVLVNVAL). Over 247–262 (CRVLGGTGGNGNLSSL) the chain is Cytoplasmic.

As to quaternary structure, forms a complex with IZUMO1 and SPACA6 on spermatocyte cell membrane required for fertilization.

It is found in the cell membrane. Functionally, essential fertilization factor required for male fertility. Part of a conserved trimeric sperm complex with the essential fertilization factors IZUMO1 and SPACA6 which bridges sperm and oocyte membranes during fertilization by binding to IZUMO1R/JUNO on the oocyte. The polypeptide is Transmembrane protein 81 (Tmem81) (Rattus norvegicus (Rat)).